Reading from the N-terminus, the 735-residue chain is Protostadienol synthase helA (735 aa).

One copy of the PFTB 1 repeat lies at 132-173; it reads KQEMCRYLLNVVNEDGGWGLFIQSPSTVFGTVMNYCMLRILG. Asp-463 functions as the Proton donor in the catalytic mechanism. PFTB repeat units follow at residues 490–531, 567–607, and 616–663; these read LQQA…YENV, LSRS…ACMG, and CQRA…AVIG.

This sequence belongs to the terpene cyclase/mutase family.

It catalyses the reaction (S)-2,3-epoxysqualene = (17Z)-protosta-17(20),24-dien-3beta-ol. It participates in mycotoxin biosynthesis. In terms of biological role, protostadienol synthase; part of the gene cluster that mediates the biosynthesis of helvolic acid, an antibacterial nortriterpenoid. Protostadienol synthase helA cyclizes (3S)-oxidosqualene to (17Z)-protosta-17(20),24-dien-3-beta-ol (protostadienol). The synthesis of protostadienol is followed by several steps of monooxygenation, dehydrogenation, and acyl transfer to yield the final helvolic acid. Following the cyclization to the tetracyclic protostadienol by helA, cytochrome P450 monooxygenases helB1-mediated and helB2-mediated oxidation at C-4 and C-16, acyltransferase helD2-dependent acetylation of 16-OH, oxidation of C-21 by cytochrome P450 monooxygenase helB4, and short chain dehydrogenase helC-dependent oxidative decarboxylation yield the fusidane skeleton. This intermediate is further modified in three additional steps mediated by the cytochrome P450 monooxygenase helB3, the acyltransferase helD1, and the 3-ketosteroid 1-dehydrogenase helE to give helvolic acid. Compared with the late stages in the biosynthesis of helvolic acid, enzymes involved in the early stage modifications act in a relatively strict order. The hydroxylation of C-16 by helB1 and subsequent acetylation by helD2 should occur before the helB3-mediated oxidation of C-21. C-4 demethylation in fusidane-type antibiotics proceeds in an unusual manner though it is also achieved by oxidative decarboxylation. The methyl group at C-4 beta position is oxidized by helB1 and subsequently removed by the short chain dehydrogenase helC. This chain is Protostadienol synthase helA, found in Aspergillus fumigatus (strain ATCC MYA-4609 / CBS 101355 / FGSC A1100 / Af293) (Neosartorya fumigata).